The chain runs to 204 residues: Golgi to ER traffic protein 1 (204 aa).

Topologically, residues 1-11 are lumenal; it reads MLTLDIDPYTI. A helical transmembrane segment spans residues 12–31; that stretch reads LVTSFLILAIQKLVTVIGKQ. Residues 32 to 116 are Cytoplasmic-facing; it reads KIQLYIWQIY…RIDSITKLAI (85 aa). A coiled-coil region spans residues 78 to 113; the sequence is AKWTKINRALDKLKLEVQELNETIAGEKTRIDSITK. Residues 117 to 137 form a helical membrane-spanning segment; it reads TLILTLPIWFLRIFCRKTALL. The Lumenal segment spans residues 138–161; sequence YIRKGILPAYLEWWLALPFFKSGT. Residues 162–178 form a helical membrane-spanning segment; sequence IGLTCWMFVVNSVLSNL. Over 179 to 204 the chain is Cytoplasmic; it reads IFLISFPFTQKVERPIKPKNEQKTES.

This sequence belongs to the WRB/GET1 family. Component of the Golgi to ER traffic (GET) complex, which is composed of GET1, GET2 and GET3. Within the complex, GET1 and GET2 form a heterotetramer which is stabilized by phosphatidylinositol binding and which binds to the GET3 homodimer.

The protein resides in the endoplasmic reticulum membrane. It is found in the golgi apparatus membrane. Functionally, required for the post-translational delivery of tail-anchored (TA) proteins to the endoplasmic reticulum. Together with GET2, acts as a membrane receptor for soluble GET3, which recognizes and selectively binds the transmembrane domain of TA proteins in the cytosol. The GET complex cooperates with the HDEL receptor ERD2 to mediate the ATP-dependent retrieval of resident ER proteins that contain a C-terminal H-D-E-L retention signal from the Golgi to the ER. The chain is Golgi to ER traffic protein 1 from Lodderomyces elongisporus (strain ATCC 11503 / CBS 2605 / JCM 1781 / NBRC 1676 / NRRL YB-4239) (Yeast).